The primary structure comprises 137 residues: Large-conductance mechanosensitive channel (137 aa).

2 consecutive transmembrane segments (helical) span residues 10 to 30 (FAMR…AAFG) and 76 to 96 (GAFI…FMAI).

It belongs to the MscL family. As to quaternary structure, homopentamer.

Its subcellular location is the cell inner membrane. Functionally, channel that opens in response to stretch forces in the membrane lipid bilayer. May participate in the regulation of osmotic pressure changes within the cell. The sequence is that of Large-conductance mechanosensitive channel from Pectobacterium carotovorum subsp. carotovorum (strain PC1).